Reading from the N-terminus, the 214-residue chain is Thiamine-phosphate synthase (214 aa).

Residues 38-42 and Asn-70 each bind 4-amino-2-methyl-5-(diphosphooxymethyl)pyrimidine; that span reads QLREK. Residues Asp-71 and Asp-90 each contribute to the Mg(2+) site. Residues Ser-109 and Lys-138 each contribute to the 4-amino-2-methyl-5-(diphosphooxymethyl)pyrimidine site. Position 165 (Gly-165) interacts with 2-[(2R,5Z)-2-carboxy-4-methylthiazol-5(2H)-ylidene]ethyl phosphate.

The protein belongs to the thiamine-phosphate synthase family. The cofactor is Mg(2+).

It carries out the reaction 2-[(2R,5Z)-2-carboxy-4-methylthiazol-5(2H)-ylidene]ethyl phosphate + 4-amino-2-methyl-5-(diphosphooxymethyl)pyrimidine + 2 H(+) = thiamine phosphate + CO2 + diphosphate. It catalyses the reaction 2-(2-carboxy-4-methylthiazol-5-yl)ethyl phosphate + 4-amino-2-methyl-5-(diphosphooxymethyl)pyrimidine + 2 H(+) = thiamine phosphate + CO2 + diphosphate. The catalysed reaction is 4-methyl-5-(2-phosphooxyethyl)-thiazole + 4-amino-2-methyl-5-(diphosphooxymethyl)pyrimidine + H(+) = thiamine phosphate + diphosphate. The protein operates within cofactor biosynthesis; thiamine diphosphate biosynthesis; thiamine phosphate from 4-amino-2-methyl-5-diphosphomethylpyrimidine and 4-methyl-5-(2-phosphoethyl)-thiazole: step 1/1. Condenses 4-methyl-5-(beta-hydroxyethyl)thiazole monophosphate (THZ-P) and 2-methyl-4-amino-5-hydroxymethyl pyrimidine pyrophosphate (HMP-PP) to form thiamine monophosphate (TMP). The chain is Thiamine-phosphate synthase from Caldanaerobacter subterraneus subsp. tengcongensis (strain DSM 15242 / JCM 11007 / NBRC 100824 / MB4) (Thermoanaerobacter tengcongensis).